The following is a 59-amino-acid chain: MRCVPVFIILLLLIPSASSAAVQPKTEKDDVPLASVHDSALRILSRQCCITIPECCRIG.

The signal sequence occupies residues 1-19 (MRCVPVFIILLLLIPSASS). Residues 20–46 (AAVQPKTEKDDVPLASVHDSALRILSR) constitute a propeptide that is removed on maturation. Gln47 is subject to Pyrrolidone carboxylic acid. Cystine bridges form between Cys48–Cys55 and Cys49–Cys56. Ile58 is modified (isoleucine amide).

This sequence belongs to the conotoxin T superfamily. In terms of tissue distribution, expressed by the venom duct.

It localises to the secreted. This is Conotoxin ViVA from Conus virgo (Virgin cone).